Here is a 214-residue protein sequence, read N- to C-terminus: 3,4-dihydroxy-2-butanone 4-phosphate synthase (214 aa).

D-ribulose 5-phosphate is bound by residues 37–38 (RE), Asp-42, 150–154 (RRGHT), and Glu-174. Residue Glu-38 participates in Mg(2+) binding. His-153 contacts Mg(2+).

The protein belongs to the DHBP synthase family. As to quaternary structure, homodimer. Mg(2+) serves as cofactor. It depends on Mn(2+) as a cofactor.

It carries out the reaction D-ribulose 5-phosphate = (2S)-2-hydroxy-3-oxobutyl phosphate + formate + H(+). Its pathway is cofactor biosynthesis; riboflavin biosynthesis; 2-hydroxy-3-oxobutyl phosphate from D-ribulose 5-phosphate: step 1/1. In terms of biological role, catalyzes the conversion of D-ribulose 5-phosphate to formate and 3,4-dihydroxy-2-butanone 4-phosphate. This Nitratidesulfovibrio vulgaris (strain DP4) (Desulfovibrio vulgaris) protein is 3,4-dihydroxy-2-butanone 4-phosphate synthase.